Reading from the N-terminus, the 400-residue chain is S-adenosylmethionine sensor upstream of mTORC1 (400 aa).

Positions 99, 168, 186, 198, 199, and 240 each coordinate S-adenosyl-L-methionine.

It belongs to the BMT2/SAMTOR family. Interacts with the GATOR1 complex; interaction is disrupted when samtor binds S-adenosyl-L-methionine. Interacts with the KICSTOR complex; interaction is disrupted when samtor binds S-adenosyl-L-methionine.

S-adenosyl-L-methionine-binding protein that acts as an inhibitor of mTORC1 signaling via interaction with the GATOR1 and KICSTOR complexes. Acts as a sensor of S-adenosyl-L-methionine to signal methionine sufficiency to mTORC1: in presence of methionine, binds S-adenosyl-L-methionine, leading to disrupt interaction with the GATOR1 and KICSTOR complexes and promote mTORC1 signaling. Upon methionine starvation, S-adenosyl-L-methionine levels are reduced, thereby promoting the association with GATOR1 and KICSTOR, leading to inhibit mTORC1 signaling. Probably also acts as a S-adenosyl-L-methionine-dependent methyltransferase. In Xenopus laevis (African clawed frog), this protein is S-adenosylmethionine sensor upstream of mTORC1.